Consider the following 451-residue polypeptide: tRNA modification GTPase MnmE (451 aa).

(6S)-5-formyl-5,6,7,8-tetrahydrofolate-binding residues include Arg28, Glu85, and Lys124. Residues 220–373 (GLYTVLVGPP…LKTRLRTLLL (154 aa)) enclose the TrmE-type G domain. A K(+)-binding site is contributed by Asn230. GTP is bound by residues 230-235 (NVGKSS), 249-255 (TDVPGTT), and 274-277 (DTAG). Ser234 provides a ligand contact to Mg(2+). K(+) contacts are provided by Thr249, Val251, and Thr254. Thr255 contacts Mg(2+). Residue Lys451 coordinates (6S)-5-formyl-5,6,7,8-tetrahydrofolate.

It belongs to the TRAFAC class TrmE-Era-EngA-EngB-Septin-like GTPase superfamily. TrmE GTPase family. As to quaternary structure, homodimer. Heterotetramer of two MnmE and two MnmG subunits. K(+) is required as a cofactor.

It localises to the cytoplasm. Its function is as follows. Exhibits a very high intrinsic GTPase hydrolysis rate. Involved in the addition of a carboxymethylaminomethyl (cmnm) group at the wobble position (U34) of certain tRNAs, forming tRNA-cmnm(5)s(2)U34. The chain is tRNA modification GTPase MnmE from Xylella fastidiosa (strain Temecula1 / ATCC 700964).